The following is a 597-amino-acid chain: DNA primase (597 aa).

Residues cysteine 40, histidine 43, cysteine 61, and cysteine 64 each contribute to the Zn(2+) site. The CHC2-type zinc-finger motif lies at 40-64; sequence CPFHGEKTPSFSVSPEKQIFHCFGC. In terms of domain architecture, Toprim spans 262–342; it reads QEALLVEGFA…RVKVASLPNG (81 aa). Glutamate 268, aspartate 311, and aspartate 313 together coordinate Mg(2+). The segment covering 429 to 447 has biased composition (basic and acidic residues); that stretch reads LSRSQRERTKPREAPDGET. The tract at residues 429–448 is disordered; the sequence is LSRSQRERTKPREAPDGETA.

This sequence belongs to the DnaG primase family. In terms of assembly, monomer. Interacts with replicative helicase DnaB, as DnaB(6):DnaG(3). A stable complex DnaI(6):DnaB(6):DnaG(3) fragment can be isolated; DnaI and DnaG do not contact each other (DnaI in this complex is derived from B.subtilis). The cofactor is Zn(2+). Mg(2+) is required as a cofactor.

The catalysed reaction is ssDNA + n NTP = ssDNA/pppN(pN)n-1 hybrid + (n-1) diphosphate.. Its function is as follows. RNA polymerase that catalyzes the synthesis of short RNA molecules used as primers for DNA polymerase during DNA replication. This is DNA primase from Geobacillus stearothermophilus (Bacillus stearothermophilus).